The chain runs to 160 residues: Myosin catalytic light chain LC-1, mantle muscle (160 aa).

Position 1 is a blocked amino end (Xaa) (Xaa-1). EF-hand domains follow at residues 7-44, 83-118, and 119-153; these read DEIEEVREVFDLFDFWDGRDGDVDAAKVGDLLRCLGMN, TAADEFMEAFKTFDREGQGLISSAEIRNVLKMLGER, and ITEDQCNDIFTFCDIREDIDGNIKYEDLMKKVMAG.

Its function is as follows. In molluscan muscle, calcium regulation is associated with myosin rather than with actin. Muscle myosin contains two types of light chains: the catalytic light chain, essential for ATPase activity, and the regulatory light chain, a calcium-binding protein responsible for Ca(2+) dependent binding and Ca(2+) dependent Mg-ATPase activity. This is Myosin catalytic light chain LC-1, mantle muscle from Todarodes pacificus (Japanese flying squid).